The sequence spans 557 residues: Large cysteine-rich periplasmic protein OmcB (557 aa).

A signal peptide spans 1–22; the sequence is MSKLIRRVVTVLALTSMASSFA. The propeptide occupies 23 to 40; that stretch reads SGKIEAAAAESLATRFIA.

Part of a disulfide cross-linked outer membrane complex (COMC) composed of the major outer membrane porin (MOMP), the small cysteine-rich protein (OmcA) and the large cysteine-rich periplasmic protein (OmcB).

Its subcellular location is the periplasm. In terms of biological role, in elementary bodies (EBs, the infectious stage, which is able to survive outside the host cell) provides the structural integrity of the outer envelope through disulfide cross-links with the small cysteine-rich protein and the major outer membrane porin. It has been described in publications as the Sarkosyl-insoluble COMC (Chlamydia outer membrane complex), and serves as the functional equivalent of peptidoglycan. It is present but the disulfide bonds are reduced in reticulate bodies (RBs). In Chlamydia abortus (strain DSM 27085 / S26/3) (Chlamydophila abortus), this protein is Large cysteine-rich periplasmic protein OmcB (omcB).